A 171-amino-acid polypeptide reads, in one-letter code: 3-hydroxydecanoyl-[acyl-carrier-protein] dehydratase (171 aa).

Histidine 70 is an active-site residue.

Belongs to the thioester dehydratase family. FabA subfamily. In terms of assembly, homodimer.

The protein resides in the cytoplasm. It catalyses the reaction a (3R)-hydroxyacyl-[ACP] = a (2E)-enoyl-[ACP] + H2O. The catalysed reaction is (3R)-hydroxydecanoyl-[ACP] = (2E)-decenoyl-[ACP] + H2O. It carries out the reaction (2E)-decenoyl-[ACP] = (3Z)-decenoyl-[ACP]. Its pathway is lipid metabolism; fatty acid biosynthesis. Necessary for the introduction of cis unsaturation into fatty acids. Catalyzes the dehydration of (3R)-3-hydroxydecanoyl-ACP to E-(2)-decenoyl-ACP and then its isomerization to Z-(3)-decenoyl-ACP. Can catalyze the dehydratase reaction for beta-hydroxyacyl-ACPs with saturated chain lengths up to 16:0, being most active on intermediate chain length. This Shewanella sediminis (strain HAW-EB3) protein is 3-hydroxydecanoyl-[acyl-carrier-protein] dehydratase.